A 157-amino-acid chain; its full sequence is uncharacterized protein (157 aa).

The first 19 residues, 1-19, serve as a signal peptide directing secretion; that stretch reads MRKYLIILVLLLFLSSSFG.

This is an uncharacterized protein from Methanocaldococcus jannaschii (strain ATCC 43067 / DSM 2661 / JAL-1 / JCM 10045 / NBRC 100440) (Methanococcus jannaschii).